A 1322-amino-acid polypeptide reads, in one-letter code: Putative DNA ligase 4 (1322 aa).

Residues E265, K267, R272, R287, E317, F387, E497, K502, R513, K519, and K521 each coordinate ATP. K267 (N6-AMP-lysine intermediate) is an active-site residue. Mg(2+) is bound at residue E317. E497 provides a ligand contact to Mg(2+). 2 consecutive BRCT domains span residues 686-768 (LDVQ…PKFD) and 825-935 (ERFC…TYSL). Disordered stretches follow at residues 945–1212 (IERS…SATC) and 1245–1310 (AEAK…KKVS). Basic and acidic residues predominate over residues 957-969 (DKLEENEKADTSH). Basic residues-rich tracts occupy residues 970–979 (VKHAPRKRGR) and 994–1005 (PVRRTRARRGNQ). Basic and acidic residues-rich tracts occupy residues 1007 to 1022 (AKID…HGET) and 1033 to 1047 (NISK…KDQV). Basic residues predominate over residues 1051–1063 (PVRRTRARRGKQH). Basic and acidic residues-rich tracts occupy residues 1082-1104 (DDQR…RDQG), 1125-1161 (AKID…KDQE), and 1190-1204 (PKHE…RDTA). Low complexity predominate over residues 1261 to 1288 (SSYVAPVPQASASSASSSGVPAPHAGSS).

Belongs to the ATP-dependent DNA ligase family. It depends on Mg(2+) as a cofactor.

The protein localises to the nucleus. The catalysed reaction is ATP + (deoxyribonucleotide)n-3'-hydroxyl + 5'-phospho-(deoxyribonucleotide)m = (deoxyribonucleotide)n+m + AMP + diphosphate.. Functionally, DNA ligase involved in DNA non-homologous end joining (NHEJ); required for double-strand break (DSB) repair. In Oryza sativa subsp. japonica (Rice), this protein is Putative DNA ligase 4 (LIG4).